The sequence spans 233 residues: Octanoyltransferase (233 aa).

One can recognise a BPL/LPL catalytic domain in the interval 36-211; it reads DTTPDEIWLV…EFTRQLGYPT (176 aa). Substrate is bound by residues 75-82, 142-144, and 155-157; these read RGGQVTYH, SLG, and GLA. Residue Cys-173 is the Acyl-thioester intermediate of the active site.

It belongs to the LipB family.

The protein resides in the cytoplasm. It carries out the reaction octanoyl-[ACP] + L-lysyl-[protein] = N(6)-octanoyl-L-lysyl-[protein] + holo-[ACP] + H(+). The protein operates within protein modification; protein lipoylation via endogenous pathway; protein N(6)-(lipoyl)lysine from octanoyl-[acyl-carrier-protein]: step 1/2. Catalyzes the transfer of endogenously produced octanoic acid from octanoyl-acyl-carrier-protein onto the lipoyl domains of lipoate-dependent enzymes. Lipoyl-ACP can also act as a substrate although octanoyl-ACP is likely to be the physiological substrate. The protein is Octanoyltransferase of Yersinia pestis bv. Antiqua (strain Antiqua).